Reading from the N-terminus, the 310-residue chain is tRNA pseudouridine synthase B (310 aa).

D38 acts as the Nucleophile in catalysis.

It belongs to the pseudouridine synthase TruB family. Type 1 subfamily.

It carries out the reaction uridine(55) in tRNA = pseudouridine(55) in tRNA. Responsible for synthesis of pseudouridine from uracil-55 in the psi GC loop of transfer RNAs. This is tRNA pseudouridine synthase B from Geotalea uraniireducens (strain Rf4) (Geobacter uraniireducens).